Reading from the N-terminus, the 397-residue chain is Elongation factor Tu (397 aa).

The region spanning 10–206 (KPHVNIGTIG…AIDSYIPTPE (197 aa)) is the tr-type G domain. The tract at residues 19-26 (GHVDHGKT) is G1. 19–26 (GHVDHGKT) is a GTP binding site. Thr26 contacts Mg(2+). Positions 60–64 (GITIN) are G2. Residues 81-84 (DCPG) are G3. GTP contacts are provided by residues 81–85 (DCPGH) and 136–139 (NKAD). Residues 136-139 (NKAD) are G4. The tract at residues 174–176 (SAL) is G5.

It belongs to the TRAFAC class translation factor GTPase superfamily. Classic translation factor GTPase family. EF-Tu/EF-1A subfamily. In terms of assembly, monomer.

The protein localises to the cytoplasm. The enzyme catalyses GTP + H2O = GDP + phosphate + H(+). In terms of biological role, GTP hydrolase that promotes the GTP-dependent binding of aminoacyl-tRNA to the A-site of ribosomes during protein biosynthesis. In Clostridium botulinum (strain ATCC 19397 / Type A), this protein is Elongation factor Tu.